The sequence spans 822 residues: Phenylalanine--tRNA ligase beta subunit (822 aa).

The tRNA-binding domain maps to 39–150 (ADRLVGFRTA…ETAPIGESYA (112 aa)). The region spanning 399–502 (DWKRTARLRF…RLYGLDNVPA (104 aa)) is the B5 domain. Residues Asp486, Glu489, and Glu490 each coordinate Mg(2+). Positions 728–821 (SPLQPVRRDF…VLKATGAVLR (94 aa)) constitute an FDX-ACB domain.

The protein belongs to the phenylalanyl-tRNA synthetase beta subunit family. Type 1 subfamily. As to quaternary structure, tetramer of two alpha and two beta subunits. Mg(2+) serves as cofactor.

It is found in the cytoplasm. It carries out the reaction tRNA(Phe) + L-phenylalanine + ATP = L-phenylalanyl-tRNA(Phe) + AMP + diphosphate + H(+). The protein is Phenylalanine--tRNA ligase beta subunit of Gluconobacter oxydans (strain 621H) (Gluconobacter suboxydans).